The chain runs to 752 residues: MAP/microtubule affinity-regulating kinase 4 (752 aa).

The tract at residues 1 to 36 (MSSRTVLAPGNDRNSDTHGTLGSGRSSDKGPSWSSR) is disordered. Residues 59 to 310 (YRLLRTIGKG…LEQIMKDKWI (252 aa)) enclose the Protein kinase domain. ATP contacts are provided by residues 65-73 (IGKGNFAKV) and Lys-88. Residue Asp-181 is the Proton acceptor of the active site. At Thr-214 the chain carries Phosphothreonine; by LKB1. Residues 324-368 (EPEEDFGDTKRIEVMVGMGYTREEIKESLTSQKYNEVTATYLLLG) form the UBA domain. The segment at 385–614 (ARVRAPSDTT…PAGRPRPTTN (230 aa)) is disordered. A compositionally biased stretch (low complexity) spans 391 to 406 (SDTTNGTSSSKGTSHS). A phosphoserine mark is found at Ser-423 and Ser-543. Residues 544 to 553 (PSSHSLAPPS) show a composition bias toward low complexity. A KA1 domain is found at 703-752 (AGGPEPLSHFEVEVCQLPRPGLRGVLFRRVAGTALAFRTLVTRISNDLEL).

This sequence belongs to the protein kinase superfamily. CAMK Ser/Thr protein kinase family. SNF1 subfamily. Interacts with MAPT/TAU. Interacts with gamma-tubulin. Interacts with ODF2. Interacts with USP9X. Interacts with YWHAQ. Interacts with NLRP3; promoting NLRP3 recruitment to microtubule organizing center (MTOC). It depends on Mg(2+) as a cofactor. In terms of processing, ubiquitinated with 'Lys-29'- and 'Lys-33'-linked polyubiquitins which appear to impede LKB1-mediated phosphorylation. Deubiquitinated by USP9X. Phosphorylated at Thr-214 by STK11/LKB1 in complex with STE20-related adapter-alpha (STRADA) pseudo kinase and CAB39. Phosphorylated throughout the cell cycle. As to expression, ubiquitous. Isoform 2 is brain-specific. Expressed at highest levels in brain and testis. Also expressed in heart, lung, liver, muscle, kidney and spleen.

The protein resides in the cytoplasm. Its subcellular location is the cytoskeleton. It is found in the microtubule organizing center. The protein localises to the centrosome. It localises to the cilium basal body. The protein resides in the cilium axoneme. Its subcellular location is the cell projection. It is found in the dendrite. The enzyme catalyses L-seryl-[protein] + ATP = O-phospho-L-seryl-[protein] + ADP + H(+). The catalysed reaction is L-threonyl-[protein] + ATP = O-phospho-L-threonyl-[protein] + ADP + H(+). Activated by phosphorylation on Thr-214. Functionally, serine/threonine-protein kinase. Phosphorylates the microtubule-associated protein MAPT/TAU. Also phosphorylates the microtubule-associated proteins MAP2 and MAP4. Involved in regulation of the microtubule network, causing reorganization of microtubules into bundles. Required for the initiation of axoneme extension during cilium assembly. Regulates the centrosomal location of ODF2 and phosphorylates ODF2 in vitro. Plays a role in cell cycle progression, specifically in the G1/S checkpoint. Reduces neuronal cell survival. Plays a role in energy homeostasis by regulating satiety and metabolic rate. Promotes adipogenesis by activating JNK1 and inhibiting the p38MAPK pathway, and triggers apoptosis by activating the JNK1 pathway. Phosphorylates mTORC1 complex member RPTOR and acts as a negative regulator of the mTORC1 complex, probably due to disruption of the interaction between phosphorylated RPTOR and the RRAGA/RRAGC heterodimer which is required for mTORC1 activation. Involved in NLRP3 positioning along microtubules by mediating NLRP3 recruitment to microtubule organizing center (MTOC) upon inflammasome activation. The chain is MAP/microtubule affinity-regulating kinase 4 from Homo sapiens (Human).